The primary structure comprises 530 residues: Bifunctional purine biosynthesis protein PurH (530 aa).

The MGS-like domain occupies 1-148; that stretch reads MENSRPIKRA…KNHKDVGIVV (148 aa).

The protein belongs to the PurH family.

The catalysed reaction is (6R)-10-formyltetrahydrofolate + 5-amino-1-(5-phospho-beta-D-ribosyl)imidazole-4-carboxamide = 5-formamido-1-(5-phospho-D-ribosyl)imidazole-4-carboxamide + (6S)-5,6,7,8-tetrahydrofolate. The enzyme catalyses IMP + H2O = 5-formamido-1-(5-phospho-D-ribosyl)imidazole-4-carboxamide. Its pathway is purine metabolism; IMP biosynthesis via de novo pathway; 5-formamido-1-(5-phospho-D-ribosyl)imidazole-4-carboxamide from 5-amino-1-(5-phospho-D-ribosyl)imidazole-4-carboxamide (10-formyl THF route): step 1/1. The protein operates within purine metabolism; IMP biosynthesis via de novo pathway; IMP from 5-formamido-1-(5-phospho-D-ribosyl)imidazole-4-carboxamide: step 1/1. The chain is Bifunctional purine biosynthesis protein PurH from Psychromonas ingrahamii (strain DSM 17664 / CCUG 51855 / 37).